Reading from the N-terminus, the 76-residue chain is DNA gyrase inhibitor YacG (76 aa).

Residues Cys-20, Cys-23, Cys-39, and Cys-43 each contribute to the Zn(2+) site. A disordered region spans residues 54–76; sequence EEKSIPGAPDLSDSDGWSDDMGY. Acidic residues predominate over residues 65 to 76; it reads SDSDGWSDDMGY.

The protein belongs to the DNA gyrase inhibitor YacG family. As to quaternary structure, interacts with GyrB. It depends on Zn(2+) as a cofactor.

In terms of biological role, inhibits all the catalytic activities of DNA gyrase by preventing its interaction with DNA. Acts by binding directly to the C-terminal domain of GyrB, which probably disrupts DNA binding by the gyrase. The polypeptide is DNA gyrase inhibitor YacG (Photobacterium profundum (strain SS9)).